Reading from the N-terminus, the 516-residue chain is Cilia- and flagella-associated protein 53 (516 aa).

Coiled-coil stretches lie at residues 217–283 and 316–440; these read EEKK…LQVK and MQGY…RQMK. Composition is skewed to basic and acidic residues over residues 417–436 and 461–472; these read KELLESATEEHKQLETDRNA and QAEREEEQREFE. 2 disordered regions span residues 417-443 and 455-475; these read KELLESATEEHKQLETDRNARQMKVAQ and YQQSQRQAEREEEQREFEAGL.

The protein belongs to the CFAP53 family.

It localises to the cytoplasm. Its subcellular location is the cytoskeleton. The protein localises to the cilium axoneme. It is found in the microtubule organizing center. The protein resides in the centrosome. It localises to the centriolar satellite. Microtubule inner protein (MIP) part of the dynein-decorated doublet microtubules (DMTs) in cilia axoneme, which is required for motile cilia beating. Regulates motility patterns of both 9+0 and 9+2 motile cilia through differential localization and recruitment of axonemal dynein components. Required for motile cilium formation and movement. Involved in the establishment of left-right symmetry during embryogenesis. The polypeptide is Cilia- and flagella-associated protein 53 (Xenopus laevis (African clawed frog)).